The chain runs to 41 residues: Large ribosomal subunit protein bL36 (41 aa).

Belongs to the bacterial ribosomal protein bL36 family.

This Parvibaculum lavamentivorans (strain DS-1 / DSM 13023 / NCIMB 13966) protein is Large ribosomal subunit protein bL36.